The sequence spans 521 residues: GMP synthase [glutamine-hydrolyzing] (521 aa).

Residues 10–204 (SLLILDFGSQ…ALGICGCEND (195 aa)) form the Glutamine amidotransferase type-1 domain. C87 serves as the catalytic Nucleophile. Active-site residues include H178 and E180. A GMPS ATP-PPase domain is found at 205–396 (WNMHNFAEEQ…LGMPREMLMR (192 aa)). 232–238 (SGGVDSS) lines the ATP pocket.

In terms of assembly, homodimer.

The enzyme catalyses XMP + L-glutamine + ATP + H2O = GMP + L-glutamate + AMP + diphosphate + 2 H(+). It functions in the pathway purine metabolism; GMP biosynthesis; GMP from XMP (L-Gln route): step 1/1. Catalyzes the synthesis of GMP from XMP. The sequence is that of GMP synthase [glutamine-hydrolyzing] from Wolinella succinogenes (strain ATCC 29543 / DSM 1740 / CCUG 13145 / JCM 31913 / LMG 7466 / NCTC 11488 / FDC 602W) (Vibrio succinogenes).